A 513-amino-acid chain; its full sequence is ATP synthase subunit alpha (513 aa).

Gly-169–Thr-176 is an ATP binding site.

This sequence belongs to the ATPase alpha/beta chains family. In terms of assembly, F-type ATPases have 2 components, CF(1) - the catalytic core - and CF(0) - the membrane proton channel. CF(1) has five subunits: alpha(3), beta(3), gamma(1), delta(1), epsilon(1). CF(0) has three main subunits: a(1), b(2) and c(9-12). The alpha and beta chains form an alternating ring which encloses part of the gamma chain. CF(1) is attached to CF(0) by a central stalk formed by the gamma and epsilon chains, while a peripheral stalk is formed by the delta and b chains.

The protein resides in the cell inner membrane. It catalyses the reaction ATP + H2O + 4 H(+)(in) = ADP + phosphate + 5 H(+)(out). Produces ATP from ADP in the presence of a proton gradient across the membrane. The alpha chain is a regulatory subunit. This is ATP synthase subunit alpha from Cronobacter sakazakii (strain ATCC BAA-894) (Enterobacter sakazakii).